The sequence spans 467 residues: Asparagine--tRNA ligase (467 aa).

Belongs to the class-II aminoacyl-tRNA synthetase family. In terms of assembly, homodimer.

The protein resides in the cytoplasm. It catalyses the reaction tRNA(Asn) + L-asparagine + ATP = L-asparaginyl-tRNA(Asn) + AMP + diphosphate + H(+). The polypeptide is Asparagine--tRNA ligase (Baumannia cicadellinicola subsp. Homalodisca coagulata).